We begin with the raw amino-acid sequence, 401 residues long: Enoyl-[acyl-carrier-protein] reductase [NADH] 1 (401 aa).

Residues 48 to 53 (GSSSGY), 74 to 75 (FE), 111 to 112 (DA), and 139 to 140 (LA) contribute to the NAD(+) site. Tyr-225 contacts substrate. Tyr-235 acts as the Proton donor in catalysis. Residues Lys-244 and 273 to 275 (VVT) contribute to the NAD(+) site.

This sequence belongs to the TER reductase family. Monomer.

The catalysed reaction is a 2,3-saturated acyl-[ACP] + NAD(+) = a (2E)-enoyl-[ACP] + NADH + H(+). It carries out the reaction a 2,3-saturated acyl-CoA + NAD(+) = a (2E)-enoyl-CoA + NADH + H(+). The enzyme catalyses (2E)-butenoyl-[ACP] + NADH + H(+) = butanoyl-[ACP] + NAD(+). It catalyses the reaction butanoyl-CoA + NAD(+) = (2E)-butenoyl-CoA + NADH + H(+). The protein operates within lipid metabolism; fatty acid biosynthesis. Weakly inhibited by triclosan. In terms of biological role, involved in the final reduction of the elongation cycle of fatty acid synthesis (FAS II). Catalyzes the NADH-dependent reduction of a carbon-carbon double bond in an enoyl moiety that is covalently linked to an acyl carrier protein (ACP). It can use both crotonyl-CoA and crotonyl-ACP. In Vibrio cholerae serotype O1 (strain ATCC 39315 / El Tor Inaba N16961), this protein is Enoyl-[acyl-carrier-protein] reductase [NADH] 1.